Consider the following 570-residue polypeptide: 4-hydroxy-7-methoxy-3-oxo-3,4-dihydro-2H-1,4-benzoxazin-2-yl glucoside beta-D-glucosidase 1c, chloroplastic (570 aa).

Residues Met-1–Ala-50 constitute a chloroplast transit peptide. Residues Gln-92, His-194, and Asn-239–Glu-240 each bind a beta-D-glucoside. Residue Glu-240 is the Proton donor of the active site. A disulfide bridge links Cys-259 with Cys-265. A beta-D-glucoside is bound by residues Tyr-383, Glu-456, Trp-504, Glu-511–Trp-512, and Phe-520. Glu-456 acts as the Nucleophile in catalysis.

Belongs to the glycosyl hydrolase 1 family. In terms of assembly, homo- and heterohexamers. In terms of tissue distribution, expressed in young seedlings early after germination.

It localises to the plastid. It is found in the chloroplast. The enzyme catalyses Hydrolysis of terminal, non-reducing beta-D-glucosyl residues with release of beta-D-glucose.. It catalyses the reaction DIMBOA beta-D-glucoside + H2O = DIMBOA + D-glucose. It carries out the reaction DIBOA beta-D-glucoside + H2O = DIBOA + D-glucose. Functionally, acts in defense of young plant parts against pests via the production of hydroxamic acids from hydroxamic acid glucosides. Enzymatic activity is highly correlated with plant growth. The preferred substrate is DIMBOA-beta-D-glucoside. The protein is 4-hydroxy-7-methoxy-3-oxo-3,4-dihydro-2H-1,4-benzoxazin-2-yl glucoside beta-D-glucosidase 1c, chloroplastic (GLU1C) of Triticum aestivum (Wheat).